A 749-amino-acid polypeptide reads, in one-letter code: Phosphate-regulating neutral endopeptidase PHEX (749 aa).

Over 1–20 the chain is Cytoplasmic; it reads MEAETGSSVETGKKANRGTR. The chain crosses the membrane as a helical; Signal-anchor for type II membrane protein span at residues 21–41; the sequence is IALVVFVGGTLVLGTILFLVS. At 42–641 the chain is on the extracellular side; it reads QGLLSLQAKQ…LNVKGKRTLG (600 aa). Residues 53–749 enclose the Peptidase M13 domain; that stretch reads YCLKPECIEA…NRGMDSCRLW (697 aa). Cys54 and Cys59 are disulfide-bonded. Asn71, Asn238, Asn263, Asn290, Asn301, Asn377, and Asn484 each carry an N-linked (GlcNAc...) asparagine glycan. Intrachain disulfides connect Cys77–Cys733, Cys85–Cys693, Cys142–Cys406, and Cys617–Cys746. His580 serves as a coordination point for Zn(2+). Residue Glu581 is part of the active site. Zn(2+) is bound by residues His584 and Glu642. The Proton donor role is filled by Asp646. An N-linked (GlcNAc...) asparagine glycan is attached at Asn736.

The protein belongs to the peptidase M13 family. In terms of assembly, interacts with MEPE; the interaction is zinc-dependent (via ASARM motif). The cofactor is Zn(2+). Specifically expressed in ovary. Expressed at low levels in kidney.

It is found in the cell membrane. In terms of biological role, peptidase that cleaves SIBLING (small integrin-binding ligand, N-linked glycoprotein)-derived ASARM peptides, thus regulating their biological activity. Cleaves ASARM peptides between Ser and Glu or Asp residues. Regulates osteogenic cell differentiation and bone mineralization through the cleavage of the MEPE-derived ASARM peptide. Promotes dentin mineralization and renal phosphate reabsorption by cleaving DMP1- and MEPE-derived ASARM peptides. Inhibits the cleavage of MEPE by CTSB/cathepsin B thus preventing MEPE degradation. This is Phosphate-regulating neutral endopeptidase PHEX (PHEX) from Homo sapiens (Human).